A 192-amino-acid polypeptide reads, in one-letter code: MDNQFIFKYSWETLPKKWVKKIEKSEHGNRFDTNTDYLFQLLCFLKLHTYTRFQVLIDICGVDYPSRKRRFEVVYNLLSTRYNSRIRLQTCADEVTRISLVVSLFPSAGWWEREVWDMFGVSFINHPDLRRILTDYGFEGHPLRKDFPLSGYVEVRYDDPEKRVVSEPIEMTQEFRYFDFASPWEQRNGNEG.

It belongs to the complex I 30 kDa subunit family. Complex I is composed of about 45 different subunits. This is a component of the iron-sulfur (IP) fragment of the enzyme.

The protein localises to the mitochondrion inner membrane. The catalysed reaction is a ubiquinone + NADH + 5 H(+)(in) = a ubiquinol + NAD(+) + 4 H(+)(out). In terms of biological role, core subunit of the mitochondrial membrane respiratory chain NADH dehydrogenase (Complex I) that is believed to belong to the minimal assembly required for catalysis. Complex I functions in the transfer of electrons from NADH to the respiratory chain. The immediate electron acceptor for the enzyme is believed to be ubiquinone. In Beta vulgaris (Sugar beet), this protein is NADH dehydrogenase [ubiquinone] iron-sulfur protein 3 (NAD9).